Reading from the N-terminus, the 357-residue chain is Protein ORF58 (357 aa).

A run of 11 helical transmembrane segments spans residues 20–40 (LAATPFLWCFIFKALYSFTLF), 44–64 (ITAVFFWSLPVTHLALICMCL), 78–98 (WICASAVFAAVVCAAFSGFTF), 101–121 (VPFIPGLCVLNCLLLLPYPLA), 132–152 (IVHRYYELGFCGAFMVYYLLL), 157–177 (FVSGVFWLPFIVFLVGGLLAF), 219–239 (VVVFVTLLLATLISTASIGLL), 242–262 (VLIGLDKYMTLFYVGLLSCVG), 270–290 (ALFVLLPLAAVLLTLVHILGS), 300–320 (CLCCLFLVSMLAAMGVEIQLI), and 333–353 (MVLALCTVGNLCISCLLSVIN).

This sequence belongs to the herpesviridae BMRF2 family.

The protein localises to the virion membrane. It localises to the host cell membrane. Participates in rearrangement of cellular actin to increase intercellular contacts and thereby promotes virus cell-to-cell spreadin$g. The polypeptide is Protein ORF58 (ORF58) (Homo sapiens (Human)).